Here is a 1343-residue protein sequence, read N- to C-terminus: DNA-directed RNA polymerase subunit beta (1343 aa).

The protein belongs to the RNA polymerase beta chain family. In terms of assembly, the RNAP catalytic core consists of 2 alpha, 1 beta, 1 beta' and 1 omega subunit. When a sigma factor is associated with the core the holoenzyme is formed, which can initiate transcription.

The catalysed reaction is RNA(n) + a ribonucleoside 5'-triphosphate = RNA(n+1) + diphosphate. Functionally, DNA-dependent RNA polymerase catalyzes the transcription of DNA into RNA using the four ribonucleoside triphosphates as substrates. This chain is DNA-directed RNA polymerase subunit beta, found in Haemophilus influenzae (strain PittEE).